Reading from the N-terminus, the 448-residue chain is Noelin-2 (448 aa).

The first 14 residues, 1–14 (MRKLRQTGTTIAGG), serve as a signal peptide directing secretion. Coiled coils occupy residues 52–79 (RDGR…LELR) and 130–187 (LEQY…AQKL). Residues Asn-68, Asn-149, Asn-269, Asn-304, Asn-393, and Asn-435 are each glycosylated (N-linked (GlcNAc...) asparagine). The 253-residue stretch at 188 to 440 (GCGKLTGVSN…QVLYNVTLFH (253 aa)) folds into the Olfactomedin-like domain. Cys-189 and Cys-371 form a disulfide bridge.

Peripherally associated with AMPAR complex. AMPAR complex consists of an inner core made of 4 pore-forming GluA/GRIA proteins (GRIA1, GRIA2, GRIA3 and GRIA4) and 4 major auxiliary subunits arranged in a twofold symmetry. One of the two pairs of distinct binding sites is occupied either by CNIH2, CNIH3 or CACNG2, CACNG3. The other harbors CACNG2, CACNG3, CACNG4, CACNG8 or GSG1L. This inner core of AMPAR complex is complemented by outer core constituents binding directly to the GluA/GRIA proteins at sites distinct from the interaction sites of the inner core constituents. Outer core constituents include at least PRRT1, PRRT2, CKAMP44/SHISA9, FRRS1L and NRN1. The proteins of the inner and outer core serve as a platform for other, more peripherally associated AMPAR constituents, including OLFM2. Alone or in combination, these auxiliary subunits control the gating and pharmacology of the AMPAR complex and profoundly impact their biogenesis and protein processing. Interacts with GRIA2. Interacts with OLFM1 and OLFM3. Interacts with SRF; the interaction promotes dissociation of SRF from the transcriptional repressor HEY2. Interacts with RUNX2. Expressed in the brain (at protein level). In the developing eye, first detected at 12 dpc in the retinal pigmented epithelium and preferentially expressed in differentiating retinal ganglion cells between 15 and 18 dpc. In the brain, expression is detected mainly in the olfactory bulb, cortex, piriform cortex, olfactory trabeculae, and inferior and superior colliculus. In the adult eye, expression is detected mainly in retinal ganglion cells. Expressed in carotid arteries.

The protein localises to the secreted. Its subcellular location is the synapse. The protein resides in the membrane. It localises to the nucleus. It is found in the cytoplasm. In terms of biological role, involved in transforming growth factor beta (TGF-beta)-induced smooth muscle differentiation. TGF-beta induces expression and nuclear translocation of OLFM2 where it binds to SRF, causing its dissociation from the transcriptional repressor HEY2/HERP1 and facilitating binding of SRF to target genes. Plays a role in AMPAR complex organization. Is a regulator of vascular smooth-muscle cell (SMC) phenotypic switching, that acts by promoting RUNX2 and inhibiting MYOCD binding to SRF. SMC phenotypic switching is the process through which vascular SMCs undergo transition between a quiescent contractile phenotype and a proliferative synthetic phenotype in response to pathological stimuli. SMC phenotypic plasticity is essential for vascular development and remodeling. This is Noelin-2 (Olfm2) from Mus musculus (Mouse).